The following is a 178-amino-acid chain: Ribosome maturation factor RimP (178 aa).

Belongs to the RimP family.

The protein localises to the cytoplasm. Required for maturation of 30S ribosomal subunits. This is Ribosome maturation factor RimP from Streptococcus pyogenes serotype M1.